Consider the following 181-residue polypeptide: Adenine phosphoribosyltransferase (181 aa).

This sequence belongs to the purine/pyrimidine phosphoribosyltransferase family. As to quaternary structure, homodimer.

It localises to the cytoplasm. It carries out the reaction AMP + diphosphate = 5-phospho-alpha-D-ribose 1-diphosphate + adenine. It participates in purine metabolism; AMP biosynthesis via salvage pathway; AMP from adenine: step 1/1. Catalyzes a salvage reaction resulting in the formation of AMP, that is energically less costly than de novo synthesis. This chain is Adenine phosphoribosyltransferase, found in Rhizobium leguminosarum bv. trifolii (strain WSM2304).